The primary structure comprises 436 residues: MQGTPAGGTSPGPSPMDRQTLLVFSLILAAALGQMNFTGDQVLRVLAKDEKQLSLLRDLEGLKPQKVDFWRGPARPSLPVDMRVPFSELKYIKAYLESHGLAYSIMIKDIQVLLDEEREAMAKSRRLERSTSSFSYSSYHTLEEISSWIDNFVTEHSDIVSKIQIGNSFENRSILVLKFSTGGSRHPAIWIDTGIHSREWITHATGIWTANKIVSDYGKDRVLTDILKAMDIFIELVTNPDGFAFTHSMNRLWRKNKSIRPGIFCIGVDLNRNWKSGFGGNGSNSNPCSETYHGPSPQSEPEVAAIVNFITAHGNFKALISIHSYSQMLMYPYGRSLEPVSNQRELYDLAKDAVEALYKVHGIEYFFGSISTTLYVASGITVDWAYDSGIKYAFSFELRDTGRYGFLLPATQIIPTAQETWMALRTIMEHTLNHPY.

Positions 1 to 33 are cleaved as a signal peptide; the sequence is MQGTPAGGTSPGPSPMDRQTLLVFSLILAAALG. The propeptide at 34–126 is activation peptide; it reads QMNFTGDQVL…EREAMAKSRR (93 aa). The Peptidase M14 domain occupies 138–431; the sequence is SYHTLEEISS…MALRTIMEHT (294 aa). Zn(2+)-binding residues include His196 and Glu199. Substrate-binding positions include 196-199, Arg254, and 271-272; these read HSRE and NR. A disulfide bridge links Cys265 with Cys288. Residue His323 coordinates Zn(2+). Residues 324–325 and Tyr375 each bind substrate; that span reads SY. The active-site Proton donor/acceptor is the Glu397.

The protein belongs to the peptidase M14 family. Zn(2+) serves as cofactor.

The protein localises to the secreted. In Macaca fascicularis (Crab-eating macaque), this protein is Carboxypeptidase A5 (CPA5).